Consider the following 623-residue polypeptide: MPSVYGDRLTTFEDSEKESEYGYVRKVSGPVVVADGMGGAAMYELVRVGHDNLIGEIIRLEGDSATIQVYEETAGLMVNDPVLRTHKPLSVELGPGILGNIFDGIQRPLKTIAKRSGDVYIPRGVSVPALDKDTLWEFQPKKIGEGDLLTGGDLYATVFENSLMQHHVALPPDAMGKITYVAPAGQYSLKDTVLELEFQGVKKQFTMLQTWPVRTPRPVASKLAADTPLLTGQRVLDALFPSVLGGTCAIPGAFGCGKTVISQALSKYSNSDTVVYVGCGERGNEMAEVLMDFPQLTMTLPDGREESVMKRTTLVANTSNMPVAAREASIYTGITIAEYFRDMGYNVSMMADSTSRWAEALREISGRLAEMPADSGYPAYLAARLASFYERAGKVKCLGGPERNGSVTIVGAVSPPGGDFSDPVTSATLSIVQVFWGLDKKLAQRKHFPSVNWLISYSKYSTALESFYEKFDSDFIDIRTKAREVLQREDDLNEIVQLVGKDALAETDKITLETAKLLREDYLAQNAFTPYDKFCPFYKSVWMMRNIIHFYNLANQAVERGAGMDGQKISYTLIKHRLGDLFYRLVSQKFEDPAEGEDVLVGKFKKLHDDLTSGFRNLEDETR.

252-259 (GAFGCGKT) contributes to the ATP binding site.

The protein belongs to the ATPase alpha/beta chains family. V-ATPase is a heteromultimeric enzyme composed of a peripheral catalytic V1 complex (main components: subunits A, B, C, D, E, and F) attached to an integral membrane V0 proton pore complex (main component: the proteolipid protein).

It carries out the reaction ATP + H2O + 4 H(+)(in) = ADP + phosphate + 5 H(+)(out). Catalytic subunit of the peripheral V1 complex of vacuolar ATPase. V-ATPase vacuolar ATPase is responsible for acidifying a variety of intracellular compartments in eukaryotic cells. The polypeptide is V-type proton ATPase catalytic subunit A (Daucus carota (Wild carrot)).